A 470-amino-acid polypeptide reads, in one-letter code: Fumarate reductase 1 (470 aa).

6-20 serves as a coordination point for FAD; it reads VVVIGTGLAGLAAAN. A Phosphoserine modification is found at Ser-66. Catalysis depends on residues His-249 and Arg-272.

This sequence belongs to the FAD-dependent oxidoreductase 2 family. FRD/SDH subfamily. The cofactor is FAD. In terms of processing, the N-terminus is blocked.

The protein resides in the cytoplasm. The catalysed reaction is succinate + NAD(+) = fumarate + NADH + H(+). In terms of biological role, irreversibly catalyzes the reduction of fumarate to succinate. Together with the second isozyme of soluble fumarate reductase (OSM1), essential for anaerobic growth. Involved in maintaining redox balance. Reduction of fumarate is the main source of succinate during fermentation, and under anaerobic conditions, the formation of succinate is strictly required for the reoxidation of FADH(2). This Saccharomyces cerevisiae (strain ATCC 204508 / S288c) (Baker's yeast) protein is Fumarate reductase 1 (FRD1).